Consider the following 345-residue polypeptide: Heat-inducible transcription repressor HrcA (345 aa).

It belongs to the HrcA family.

In terms of biological role, negative regulator of class I heat shock genes (grpE-dnaK-dnaJ and groELS operons). Prevents heat-shock induction of these operons. The polypeptide is Heat-inducible transcription repressor HrcA (Lachnoclostridium phytofermentans (strain ATCC 700394 / DSM 18823 / ISDg) (Clostridium phytofermentans)).